Here is a 160-residue protein sequence, read N- to C-terminus: Salivary gland broad-spectrum antiviral protein (160 aa).

A helical membrane pass occupies residues 17–37 (VALGLYFTVVVFVLFITSVNL). N-linked (GlcNAc...) asparagine glycosylation is found at Asn-62 and Asn-145.

Salivary gland (at protein level).

It localises to the membrane. (Microbial infection) Modulates replication of Zika virus in salivary glands. In terms of biological role, (Microbial infection) Modulates replication of dengue virus type 2 in salivary glands. Its function is as follows. (Microbial infection) Modulates replication of chikungunya virus in salivary glands. The sequence is that of Salivary gland broad-spectrum antiviral protein from Aedes aegypti (Yellowfever mosquito).